The primary structure comprises 60 residues: Metallothionein (60 aa).

The beta stretch occupies residues methionine 1–cysteine 28. Cysteine 4, cysteine 6, cysteine 12, cysteine 14, cysteine 18, cysteine 20, cysteine 23, cysteine 25, cysteine 28, cysteine 32, cysteine 33, cysteine 35, cysteine 36, cysteine 40, cysteine 43, cysteine 47, cysteine 49, cysteine 54, cysteine 58, and cysteine 59 together coordinate a divalent metal cation. The alpha stretch occupies residues lysine 29–glutamine 60.

This sequence belongs to the metallothionein superfamily. Type 1 family.

Its function is as follows. Metallothioneins have a high content of cysteine residues that bind various heavy metals. The sequence is that of Metallothionein (mt) from Gobiomorphus cotidianus (New Zealand common bully).